Here is a 357-residue protein sequence, read N- to C-terminus: Phenylalanine--tRNA ligase alpha subunit (357 aa).

Glutamate 258 provides a ligand contact to Mg(2+).

Belongs to the class-II aminoacyl-tRNA synthetase family. Phe-tRNA synthetase alpha subunit type 1 subfamily. Tetramer of two alpha and two beta subunits. The cofactor is Mg(2+).

It is found in the cytoplasm. The enzyme catalyses tRNA(Phe) + L-phenylalanine + ATP = L-phenylalanyl-tRNA(Phe) + AMP + diphosphate + H(+). The sequence is that of Phenylalanine--tRNA ligase alpha subunit from Caulobacter vibrioides (strain ATCC 19089 / CIP 103742 / CB 15) (Caulobacter crescentus).